The following is a 203-amino-acid chain: Cilia- and flagella-associated protein 20 (203 aa).

The protein belongs to the CFAP20 family.

The protein localises to the nucleus. Its subcellular location is the cytoplasm. The protein resides in the cytoskeleton. It localises to the microtubule organizing center. It is found in the centrosome. The protein localises to the centriole. Its subcellular location is the cilium basal body. The protein resides in the cilium axoneme. In terms of biological role, cilium- and flagellum-specific protein that plays a role in axonemal structure organization and motility. Microtubule inner protein (MIP) part of the dynein-decorated doublet microtubules (DMTs) in cilia axoneme, which is required for motile cilia beating. Involved in the regulation of the size and morphology of cilia. Required for axonemal microtubules polyglutamylation. In Caenorhabditis elegans, this protein is Cilia- and flagella-associated protein 20.